The primary structure comprises 659 residues: Threonine--tRNA ligase (659 aa).

In terms of domain architecture, TGS spans 7-70 (VQATVTVTFP…TDDATVEIIT (64 aa)). The tract at residues 255-557 (DHRKLGAELE…LIEHTAGNFP (303 aa)) is catalytic. Zn(2+)-binding residues include Cys-353, His-404, and His-534.

Belongs to the class-II aminoacyl-tRNA synthetase family. In terms of assembly, homodimer. The cofactor is Zn(2+).

The protein localises to the cytoplasm. The catalysed reaction is tRNA(Thr) + L-threonine + ATP = L-threonyl-tRNA(Thr) + AMP + diphosphate + H(+). Its function is as follows. Catalyzes the attachment of threonine to tRNA(Thr) in a two-step reaction: L-threonine is first activated by ATP to form Thr-AMP and then transferred to the acceptor end of tRNA(Thr). Also edits incorrectly charged L-seryl-tRNA(Thr). The polypeptide is Threonine--tRNA ligase (Chlorobium phaeobacteroides (strain BS1)).